The sequence spans 148 residues: Urease accessory protein UreE (148 aa).

This sequence belongs to the UreE family.

It is found in the cytoplasm. Its function is as follows. Involved in urease metallocenter assembly. Binds nickel. Probably functions as a nickel donor during metallocenter assembly. In Nostoc punctiforme (strain ATCC 29133 / PCC 73102), this protein is Urease accessory protein UreE.